We begin with the raw amino-acid sequence, 690 residues long: MADSSAIYLAAPESQTGKSTIALGLLHRLTAMVAKVGVFRPITRLSAERDYILELLLAHTSAGLPYERCVGVTYQQLHADRDDAIAEIVDSYHAMADECDAVVVVGSDYTDVTSPTELSVNGRIAVNLGAPVLLTVRAKDRTPDQVASVVEVCLAELDTQRAHTAAVVANRCELSAIPAVTDALRRFTPPSYVVPEEPLLSAPTVAELTQAVNGAVVSGDVALREREVMGVLAAGMTADHVLERLTDGMAVITPGDRSDVVLAVASAHAAEGFPSLSCIVLNGGFQLHPAIAALVSGLRLRLPVIATALGTYDTASAAASARGLVTATSQRKIDTALELMDRHVDVAGLLAQLTIPIPTVTTPQMFTYRLLQQARSDLMRIVLPEGDDDRILKSAGRLLQRGIVDLTILGDEAKVRLRAAELGVDLDGATVIEPCASELHDQFADQYAQLRKAKGITVEHAREIMNDATYFGTMLVHNCHADGMVSGAAHTTAHTVRPALEIIKTVPGISTVSSIFLMCLPDRVLAYGDCAIIPNPTVEQLADIAICSARTAAQFGIEPRVAMLSYSTGDSGKGADVDKVRAATELVRAREPQLPVEGPIQYDAAVEPSVAATKLRDSPVAGRATVLIFPDLNTGNNTYKAVQRSAGAIAIGPVLQGLRKPVNDLSRGALVDDIVNTVAITAIQAQGVHE.

The interval 365 to 690 (MFTYRLLQQA…TAIQAQGVHE (326 aa)) is phosphate acetyltransferase.

The protein in the N-terminal section; belongs to the CobB/CobQ family. This sequence in the C-terminal section; belongs to the phosphate acetyltransferase and butyryltransferase family.

It is found in the cytoplasm. The enzyme catalyses acetyl-CoA + phosphate = acetyl phosphate + CoA. It participates in metabolic intermediate biosynthesis; acetyl-CoA biosynthesis; acetyl-CoA from acetate: step 2/2. Involved in acetate metabolism. The chain is Phosphate acetyltransferase (pta) from Mycobacterium tuberculosis (strain CDC 1551 / Oshkosh).